Here is an 834-residue protein sequence, read N- to C-terminus: Glycerol-3-phosphate acyltransferase (834 aa).

Positions 309 to 314 (CHRSHI) match the HXXXXD motif motif.

This sequence belongs to the GPAT/DAPAT family.

It localises to the cell inner membrane. The enzyme catalyses sn-glycerol 3-phosphate + an acyl-CoA = a 1-acyl-sn-glycero-3-phosphate + CoA. It participates in phospholipid metabolism; CDP-diacylglycerol biosynthesis; CDP-diacylglycerol from sn-glycerol 3-phosphate: step 1/3. In Pseudomonas aeruginosa (strain UCBPP-PA14), this protein is Glycerol-3-phosphate acyltransferase.